A 313-amino-acid polypeptide reads, in one-letter code: Intelectin-1 (313 aa).

The first 18 residues, methionine 1 to serine 18, serve as a signal peptide directing secretion. In terms of domain architecture, Fibrinogen C-terminal spans serine 32–arginine 255. Cysteine 41 and cysteine 70 are joined by a disulfide. Ca(2+) contacts are provided by histidine 86, glutamate 87, aspartate 89, glycine 92, glycine 97, aspartate 98, and aspartate 133. Cystine bridges form between cysteine 94–cysteine 280, cysteine 199–cysteine 259, and cysteine 251–cysteine 265. Asparagine 163 is a glycosylation site (N-linked (GlcNAc...) asparagine). Positions 260, 262, 274, and 282 each coordinate Ca(2+). Residues glutamate 262 to histidine 263 and glutamate 274 each bind a carbohydrate. The GPI-anchor amidated serine moiety is linked to residue serine 298. Positions serine 299–arginine 313 are excised as a propeptide.

In terms of assembly, homotrimer; disulfide-linked. May interact with LTF. In terms of processing, N-glycosylated. As to expression, highly expressed in omental adipose tissue where it is found in stromal vascular cells but not in fat cells but is barely detectable in subcutaneous adipose tissue (at protein level). Highly expressed in the small intestine. Also found in the heart, testis, colon, salivary gland, skeletal muscle, pancreas and thyroid and, to a lesser degree, in the uterus, spleen, prostate, lymph node and thymus.

The protein resides in the cell membrane. It is found in the secreted. Functionally, lectin that specifically recognizes microbial carbohydrate chains in a calcium-dependent manner. Binds to microbial glycans that contain a terminal acyclic 1,2-diol moiety, including beta-linked D-galactofuranose (beta-Galf), D-phosphoglycerol-modified glycans, D-glycero-D-talo-oct-2-ulosonic acid (KO) and 3-deoxy-D-manno-oct-2-ulosonic acid (KDO). Binds to glycans from Gram-positive and Gram-negative bacteria, including K.pneumoniae, S.pneumoniae, Y.pestis, P.mirabilis and P.vulgaris. Does not bind human glycans. Probably plays a role in the defense system against microorganisms. May function as adipokine that has no effect on basal glucose uptake but enhances insulin-stimulated glucose uptake in adipocytes. Increases AKT phosphorylation in the absence and presence of insulin. May interact with lactoferrin/LTF and increase its uptake, and may thereby play a role in iron absorption. The sequence is that of Intelectin-1 (ITLN1) from Homo sapiens (Human).